The chain runs to 428 residues: MEFIDLAPSAHARGAVQLPGSKSISNRTLLLAALAQGETQIRDLLKSDDTDRMLEALTSLGVTLTRTGENDYHLVGTGGSFPHKEADLFLGNAGTAFRPLTAALAFSGGTYKLHGVPRMHERPIGDLVDALRQVGADITYLGQEGFPPLLIKPAHIAAQGSIKIRGDVSSQFLTALLMALPMTGKETHIELVSELISKPYIEITLRLMAQFGVEVQRDGWERFTVPAASGYVSPGTVYVEGDASSASYFLAAGALGGGPVRVQGVGAKSIQGDVAFADALEAIGVTITKGDNWIEASAPQLPLKAFNRDFNHIPDAAMTLAVVALFCDGPSRLTNIASWRVKETDRIAAMATELRKLGAIVEEGEDWLQVTPVPTLNAQVPIDTYDDHRMAMCFSLATFGGVPVRINDPQCTAKTFPTYFDVFSQVVS.

3-phosphoshikimate is bound by residues Lys22, Ser23, and Arg27. Lys22 lines the phosphoenolpyruvate pocket. Phosphoenolpyruvate is bound by residues Gly94 and Arg122. Residues Ser169, Ser170, Gln171, Ser197, Asp315, and Lys342 each coordinate 3-phosphoshikimate. Phosphoenolpyruvate is bound at residue Gln171. Asp315 acts as the Proton acceptor in catalysis. Phosphoenolpyruvate-binding residues include Arg346, Arg389, and Lys414.

Belongs to the EPSP synthase family. In terms of assembly, monomer.

It localises to the cytoplasm. The enzyme catalyses 3-phosphoshikimate + phosphoenolpyruvate = 5-O-(1-carboxyvinyl)-3-phosphoshikimate + phosphate. Its pathway is metabolic intermediate biosynthesis; chorismate biosynthesis; chorismate from D-erythrose 4-phosphate and phosphoenolpyruvate: step 6/7. Its function is as follows. Catalyzes the transfer of the enolpyruvyl moiety of phosphoenolpyruvate (PEP) to the 5-hydroxyl of shikimate-3-phosphate (S3P) to produce enolpyruvyl shikimate-3-phosphate and inorganic phosphate. The sequence is that of 3-phosphoshikimate 1-carboxyvinyltransferase from Cellvibrio japonicus (strain Ueda107) (Pseudomonas fluorescens subsp. cellulosa).